A 419-amino-acid chain; its full sequence is UDP-N-acetylglucosamine 1-carboxyvinyltransferase (419 aa).

22 to 23 is a phosphoenolpyruvate binding site; the sequence is KN. A UDP-N-acetyl-alpha-D-glucosamine-binding site is contributed by Arg-93. The Proton donor role is filled by Cys-117. Residue Cys-117 is modified to 2-(S-cysteinyl)pyruvic acid O-phosphothioketal. UDP-N-acetyl-alpha-D-glucosamine is bound by residues 122-126, Asp-308, and Ile-330; that span reads RPVDL.

This sequence belongs to the EPSP synthase family. MurA subfamily.

It localises to the cytoplasm. The enzyme catalyses phosphoenolpyruvate + UDP-N-acetyl-alpha-D-glucosamine = UDP-N-acetyl-3-O-(1-carboxyvinyl)-alpha-D-glucosamine + phosphate. Its pathway is cell wall biogenesis; peptidoglycan biosynthesis. Cell wall formation. Adds enolpyruvyl to UDP-N-acetylglucosamine. This chain is UDP-N-acetylglucosamine 1-carboxyvinyltransferase, found in Pseudomonas putida (Arthrobacter siderocapsulatus).